Reading from the N-terminus, the 288-residue chain is 4-diphosphocytidyl-2-C-methyl-D-erythritol kinase (288 aa).

Residue K13 is part of the active site. 96 to 106 (PMGGGIGGGSS) contacts ATP. D138 is an active-site residue.

This sequence belongs to the GHMP kinase family. IspE subfamily.

It catalyses the reaction 4-CDP-2-C-methyl-D-erythritol + ATP = 4-CDP-2-C-methyl-D-erythritol 2-phosphate + ADP + H(+). Its pathway is isoprenoid biosynthesis; isopentenyl diphosphate biosynthesis via DXP pathway; isopentenyl diphosphate from 1-deoxy-D-xylulose 5-phosphate: step 3/6. Functionally, catalyzes the phosphorylation of the position 2 hydroxy group of 4-diphosphocytidyl-2C-methyl-D-erythritol. The chain is 4-diphosphocytidyl-2-C-methyl-D-erythritol kinase from Aliivibrio fischeri (strain MJ11) (Vibrio fischeri).